The following is a 396-amino-acid chain: Probable protein phosphatase 2C 25 (396 aa).

Residues 32-98 (ESLSLTLSHR…SPPGGVLKRK (67 aa)) are disordered. A compositionally biased stretch (low complexity) spans 44–61 (QTSSPSSPSTTVSSPKSP). Positions 139–392 (GYSVYCKRGR…DDISVMLIPL (254 aa)) constitute a PPM-type phosphatase domain. Mn(2+)-binding residues include D175, G176, D338, and D383.

Belongs to the PP2C family. Interacts with MPK4 and MPK6. Mg(2+) serves as cofactor. The cofactor is Mn(2+).

Its subcellular location is the cytoplasm. The protein localises to the nucleus. It carries out the reaction O-phospho-L-seryl-[protein] + H2O = L-seryl-[protein] + phosphate. The enzyme catalyses O-phospho-L-threonyl-[protein] + H2O = L-threonyl-[protein] + phosphate. Its function is as follows. Protein phosphatase that negatively regulates defense respones. Inactivates MPK4 and MPK6 MAP kinases involved in stress and defense signaling. This chain is Probable protein phosphatase 2C 25, found in Arabidopsis thaliana (Mouse-ear cress).